A 406-amino-acid chain; its full sequence is Argininosuccinate synthase (406 aa).

Residues 10-18 (AYSGGLDTS) and Ala-37 contribute to the ATP site. L-citrulline is bound by residues Tyr-88 and Ser-93. Gly-118 contributes to the ATP binding site. The L-aspartate site is built by Thr-120, Asn-124, and Asp-125. Asn-124 is an L-citrulline binding site. 5 residues coordinate L-citrulline: Arg-128, Ser-180, Ser-189, Glu-265, and Tyr-277.

It belongs to the argininosuccinate synthase family. Type 1 subfamily. In terms of assembly, homotetramer.

It is found in the cytoplasm. The catalysed reaction is L-citrulline + L-aspartate + ATP = 2-(N(omega)-L-arginino)succinate + AMP + diphosphate + H(+). Its pathway is amino-acid biosynthesis; L-arginine biosynthesis; L-arginine from L-ornithine and carbamoyl phosphate: step 2/3. This is Argininosuccinate synthase from Methylobacillus flagellatus (strain ATCC 51484 / DSM 6875 / VKM B-1610 / KT).